Reading from the N-terminus, the 571-residue chain is uncharacterized protein (571 aa).

The disordered stretch occupies residues 1-25 (MAPSVATSLKAEILPSPRTSSPSSN). In terms of domain architecture, FAD-binding FR-type spans 135 to 389 (FSVFPAPILD…RGLHKNAFAT (255 aa)). Residues 447–479 (NPLQKSSDDDASSTVSQQTETEMDSFEVKKDGT) are disordered.

It belongs to the flavoprotein pyridine nucleotide cytochrome reductase family. The cofactor is FAD.

This is an uncharacterized protein from Schizosaccharomyces pombe (strain 972 / ATCC 24843) (Fission yeast).